Here is a 437-residue protein sequence, read N- to C-terminus: Glutamate-1-semialdehyde 2,1-aminomutase (437 aa).

Lys-279 is modified (N6-(pyridoxal phosphate)lysine).

It belongs to the class-III pyridoxal-phosphate-dependent aminotransferase family. HemL subfamily. In terms of assembly, homodimer. It depends on pyridoxal 5'-phosphate as a cofactor.

It is found in the cytoplasm. It carries out the reaction (S)-4-amino-5-oxopentanoate = 5-aminolevulinate. The protein operates within porphyrin-containing compound metabolism; protoporphyrin-IX biosynthesis; 5-aminolevulinate from L-glutamyl-tRNA(Glu): step 2/2. The chain is Glutamate-1-semialdehyde 2,1-aminomutase from Sorangium cellulosum (strain So ce56) (Polyangium cellulosum (strain So ce56)).